We begin with the raw amino-acid sequence, 100 residues long: MAVAYCCLSLFLVSTWVALLLQPLQGTWGAPLEPMYPGDYATPEQMAQYETQLRRYINTLTRPRYGKRAEEENTGGLPGVQLSPCTSPPVGLIPCSAPWS.

Positions 1-29 (MAVAYCCLSLFLVSTWVALLLQPLQGTWG) are cleaved as a signal peptide. Residue Tyr65 is modified to Tyrosine amide.

The protein belongs to the NPY family. Post-translationally, no icosapeptide-like peptide is cleaved from the C-terminal.

It is found in the secreted. Functionally, hormone secreted by pancreatic cells that acts as a regulator of pancreatic and gastrointestinal functions probably by signaling through the G protein-coupled receptor NPY4R2. The sequence is that of Pancreatic polypeptide prohormone (Ppy) from Mus musculus (Mouse).